We begin with the raw amino-acid sequence, 194 residues long: Inner membrane-spanning protein YciB (194 aa).

5 helical membrane-spanning segments follow: residues 1–21 (MKLL…KTTN), 49–69 (EKMH…TILF), 77–97 (WKPS…GWVS), 120–140 (LNYS…YVAY), and 150–170 (FKLF…GVYI).

The protein belongs to the YciB family.

The protein resides in the cell inner membrane. Functionally, plays a role in cell envelope biogenesis, maintenance of cell envelope integrity and membrane homeostasis. The chain is Inner membrane-spanning protein YciB from Hahella chejuensis (strain KCTC 2396).